A 103-amino-acid chain; its full sequence is Co-chaperonin GroES (103 aa).

The protein belongs to the GroES chaperonin family. In terms of assembly, heptamer of 7 subunits arranged in a ring. Interacts with the chaperonin GroEL.

It localises to the cytoplasm. In terms of biological role, together with the chaperonin GroEL, plays an essential role in assisting protein folding. The GroEL-GroES system forms a nano-cage that allows encapsulation of the non-native substrate proteins and provides a physical environment optimized to promote and accelerate protein folding. GroES binds to the apical surface of the GroEL ring, thereby capping the opening of the GroEL channel. In Picosynechococcus sp. (strain ATCC 27264 / PCC 7002 / PR-6) (Agmenellum quadruplicatum), this protein is Co-chaperonin GroES.